Reading from the N-terminus, the 405-residue chain is Multi-drug resistance efflux pump PmrA homolog (405 aa).

The next 12 membrane-spanning stretches (helical) occupy residues 13 to 33 (LFIT…VMPF), 50 to 70 (LYSG…APIW), 88 to 108 (IVMT…WLLG), 111 to 131 (LLMG…ASQA), 147 to 167 (MVSG…WFGM), 170 to 190 (VFLI…FFVH), 216 to 236 (ILFG…SIEP), 254 to 274 (FISG…SSFL), 286 to 306 (LILI…FVQS), 308 to 328 (LQLG…TPSV), 350 to 370 (MCSN…AGYI), and 374 to 394 (AAIV…FINF).

This sequence belongs to the major facilitator superfamily. TCR/Tet family.

Its subcellular location is the cell membrane. Its function is as follows. Efflux pump for various substrates. This is Multi-drug resistance efflux pump PmrA homolog (pmrA) from Lactococcus lactis subsp. lactis (strain IL1403) (Streptococcus lactis).